A 393-amino-acid polypeptide reads, in one-letter code: Pre-mRNA splicing factor SR-like 1 (393 aa).

A disordered region spans residues 173 to 393; it reads MNLPTKPSGS…VIKLGGSSWR (221 aa). Positions 249 to 312 are enriched in basic and acidic residues; it reads QSRDYYSDRD…RNDYEDDRSR (64 aa). Positions 301–308 match the Nuclear localization signal motif; that stretch reads SRRNDYED. Residues 313–325 are compositionally biased toward basic residues; it reads HDRRSRSRSRSRS. Basic and acidic residues-rich tracts occupy residues 329 to 346 and 356 to 385; these read QIEREPTPKRDSSNKEKS and KLKDLYGDASSQKRDEGFGTRKDSSSEEVI.

It belongs to the PRP38 family. In terms of processing, phosphorylated. In terms of tissue distribution, mostly expressed in siliques and leaves, also present in seedlings, flowers and stems, and, at low levels, in roots.

The protein localises to the nucleus. In terms of biological role, may be required for pre-mRNA splicing. Confers salt tolerance to LiCl and NaCl. This is Pre-mRNA splicing factor SR-like 1 from Arabidopsis thaliana (Mouse-ear cress).